Consider the following 209-residue polypeptide: Octanoyltransferase (209 aa).

In terms of domain architecture, BPL/LPL catalytic spans 30–209 (DNEPEIVYLV…IQTEFNKIFK (180 aa)). Substrate-binding positions include 69–76 (RGGKFTFH), 143–145 (AIG), and 156–158 (GVA). The active-site Acyl-thioester intermediate is Cys-174.

Belongs to the LipB family.

Its subcellular location is the cytoplasm. The catalysed reaction is octanoyl-[ACP] + L-lysyl-[protein] = N(6)-octanoyl-L-lysyl-[protein] + holo-[ACP] + H(+). It participates in protein modification; protein lipoylation via endogenous pathway; protein N(6)-(lipoyl)lysine from octanoyl-[acyl-carrier-protein]: step 1/2. Catalyzes the transfer of endogenously produced octanoic acid from octanoyl-acyl-carrier-protein onto the lipoyl domains of lipoate-dependent enzymes. Lipoyl-ACP can also act as a substrate although octanoyl-ACP is likely to be the physiological substrate. The sequence is that of Octanoyltransferase from Rickettsia felis (strain ATCC VR-1525 / URRWXCal2) (Rickettsia azadi).